The following is a 143-amino-acid chain: Large ribosomal subunit protein uL15 (143 aa).

Composition is skewed to basic residues over residues 1–13 (MIRKSKKITKMRG) and 23–38 (KKHRGAGHRGGRGNAG). Residues 1–38 (MIRKSKKITKMRGSRTCGYGEAKKHRGAGHRGGRGNAG) form a disordered region.

Belongs to the universal ribosomal protein uL15 family. In terms of assembly, part of the 50S ribosomal subunit.

Binds to the 23S rRNA. The chain is Large ribosomal subunit protein uL15 from Methanococcus maripaludis (strain C6 / ATCC BAA-1332).